The following is a 126-amino-acid chain: MSKSKTPNFDDMEVLDDTNDEYDDSESEWIDLDRGESVVGEIREINPDCGDYGTTVLELSRGLGDNVCMWSNRQIDNKIEQHGLGVGEVVGIKHTDREQTFTPDGSDEPVKFDVYEVRAVNVGGND.

The tract at residues 1-27 (MSKSKTPNFDDMEVLDDTNDEYDDSES) is disordered. The segment covering 10 to 27 (DDMEVLDDTNDEYDDSES) has biased composition (acidic residues).

This is an uncharacterized protein from Halorubrum sp. PV6 (HRPV-1).